A 334-amino-acid polypeptide reads, in one-letter code: Anthranilate phosphoribosyltransferase (334 aa).

5-phospho-alpha-D-ribose 1-diphosphate contacts are provided by residues Gly-79, 82–83 (GD), Ser-87, 89–92 (NIST), 107–115 (KAGNRSISS), and Ser-119. An anthranilate-binding site is contributed by Gly-79. Ser-91 is a Mg(2+) binding site. An anthranilate-binding site is contributed by Asn-110. An anthranilate-binding site is contributed by Arg-165. Mg(2+) contacts are provided by Asp-224 and Glu-225.

Belongs to the anthranilate phosphoribosyltransferase family. In terms of assembly, homodimer. Mg(2+) serves as cofactor.

The catalysed reaction is N-(5-phospho-beta-D-ribosyl)anthranilate + diphosphate = 5-phospho-alpha-D-ribose 1-diphosphate + anthranilate. Its pathway is amino-acid biosynthesis; L-tryptophan biosynthesis; L-tryptophan from chorismate: step 2/5. Functionally, catalyzes the transfer of the phosphoribosyl group of 5-phosphorylribose-1-pyrophosphate (PRPP) to anthranilate to yield N-(5'-phosphoribosyl)-anthranilate (PRA). This Streptococcus thermophilus (strain ATCC BAA-491 / LMD-9) protein is Anthranilate phosphoribosyltransferase.